The primary structure comprises 638 residues: Zinc finger and BTB domain-containing protein 22 (638 aa).

A BTB domain is found at 57–121; that stretch reads CDVSIRVQGR…AYTGRLSMAA (65 aa). Disordered stretches follow at residues 171–223, 229–248, 335–354, and 367–451; these read CASV…STSQ, SAAG…APVV, DDED…GEPE, and EPAD…HGAV. Residues 189 to 210 show a composition bias toward polar residues; it reads SVRSHTSSRASENQSPSSSNYF. Ser203 carries the phosphoserine modification. The segment at 483–504 adopts a C2H2-type 1; atypical zinc-finger fold; that stretch reads FLCHCGKAFSHKSMRDRHVNMH. 2 consecutive C2H2-type zinc fingers follow at residues 510-532 and 538-559; these read FDCP…MKTH and YECS…HRGH. The tract at residues 564 to 638 is disordered; it reads HRMGVGGVGS…DFSGGGGAAH (75 aa).

Belongs to the krueppel C2H2-type zinc-finger protein family.

It is found in the nucleus. In terms of biological role, may be involved in transcriptional regulation. This chain is Zinc finger and BTB domain-containing protein 22 (Zbtb22), found in Mus musculus (Mouse).